We begin with the raw amino-acid sequence, 156 residues long: Ribosomal RNA large subunit methyltransferase H (156 aa).

Residues leucine 73, glycine 104, and 123–128 (LSSLTL) contribute to the S-adenosyl-L-methionine site.

Belongs to the RNA methyltransferase RlmH family. In terms of assembly, homodimer.

The protein localises to the cytoplasm. It carries out the reaction pseudouridine(1915) in 23S rRNA + S-adenosyl-L-methionine = N(3)-methylpseudouridine(1915) in 23S rRNA + S-adenosyl-L-homocysteine + H(+). Functionally, specifically methylates the pseudouridine at position 1915 (m3Psi1915) in 23S rRNA. The protein is Ribosomal RNA large subunit methyltransferase H of Bordetella bronchiseptica (strain ATCC BAA-588 / NCTC 13252 / RB50) (Alcaligenes bronchisepticus).